The primary structure comprises 1197 residues: Envelopment polyprotein (1197 aa).

Residues 1-16 (MYVLLTILTSVLVCEA) form the signal peptide. Residues 17-130 (IIRVSLSSTR…RDAKQIGRKT (114 aa)) are Cytoplasmic-facing. Residues 131–153 (MAGIAMTVLPALAVFALAPVVFA) are internal signal sequence for glycoprotein N. Residues 154 to 582 (EDPHLRNRPG…GLINYQCHTA (429 aa)) are Lumenal-facing. Disulfide bonds link C179–C188, C229–C239, C250–C281, C271–C284, C304–C456, C322–C332, C374–C434, C402–C413, C420–C425, C479–C482, C486–C556, and C506–C511. The chain crosses the membrane as a helical span at residues 583–603 (LSAFVVVFVFSSIAIICLAIL). Residues 604-673 (YRVLKCLKIA…APIPRHAPIP (70 aa)) lie on the Cytoplasmic side of the membrane. Residues 608 to 650 (KCLKIAPRKVLNPLMWITAFIRWIYKKMVARVADNINQVNREI) are golgi retention signal. The tract at residues 646–650 (VNREI) is important for correct targeting of the glycoproteins to the Golgi complex but not for heterodimerization. The interval 675 to 690 (YSTYLMLLLIVSYASA) is internal signal sequence for glycoprotein C. 12 disulfide bridges follow: C691-C731, C704-C713, C756-C852, C771-C965, C777-C825, C783-C832, C788-C814, C818-C823, C934-C947, C1029-C1101, C1039-C1042, and C1049-C1083. Topologically, residues 691 to 1159 (CSELIQASSR…MSWFGGPLKT (469 aa)) are lumenal. Residues 777–783 (CHLVGEC) form a fusion loop region. N-linked (GlcNAc...) asparagine; by host glycosylation is present at N794. A fusion loop region spans residues 819-830 (GGWGCGCFNVNP). The N-linked (GlcNAc...) asparagine; by host glycan is linked to N1035. N1077 carries N-linked (GlcNAc...) asparagine; by host glycosylation. A helical membrane pass occupies residues 1160-1180 (ILLICLYVALSIGLFFLLIYL). At 1181–1197 (GGTGLSKMWLAATKKAS) the chain is on the cytoplasmic side.

Belongs to the phlebovirus envelope glycoprotein family. Heterodimer with glycoprotein C. Homotrimer (postfusion). Interacts with nucleocapsid protein N and with the polymerase L in order to package them into virus particles. Interacts with host E3 ubiquitin-protein ligase UBR4; this interaction is important for viral RNA production. Interacts with host LRP1; this interaction facilitates virus entry into the host cell. In terms of assembly, heterodimer with glycoprotein C. In terms of processing, specific enzymatic cleavages in vivo yield mature proteins including NSm protein, Glycoprotein C, and Glycoprotein N. Glycosylated. The glycans can attach to host CD209/DC-SIGN, and may play a role in virus entry into dendritic cells. Post-translationally, palmitoylated.

It localises to the virion membrane. The protein localises to the host Golgi apparatus membrane. Its subcellular location is the host endoplasmic reticulum membrane. The protein resides in the host mitochondrion outer membrane. It is found in the host Golgi apparatus. It localises to the virion. Its function is as follows. Structural component of the virion that interacts with glycoprotein C. It shields the hydrophobic fusion loops of the glycoprotein C, preventing premature fusion. The glycoprotein protrusions are arranged on an icosahedral lattice, with T=12 triangulation. They are able to attach the virion to the host cell receptor CD209/DC-SIGN and to promote fusion of membranes with the late endosome after endocytosis of the virion. Plays a role in the packaging of ribonucleoproteins and polymerase during virus assembly. Structural component of the virion that interacts with glycoprotein N. Acts as a class II fusion protein that is activated upon acidification and subsequent repositioning of the glycoprotein N. The glycoprotein protrusions are arranged on an icosahedral lattice, with T=12 triangulation. They are able to attach the virion to the host cell receptor CD209/DC-SIGN and to promote fusion of membranes with the late endosome after endocytosis of the virion. Functionally, plays a role in the inhibition of virus-induced apoptosis. Plays a role for virus dissemination in vertebrates. In terms of biological role, plays a role for virus dissemination in mosquitoes. May act as a structural virion protein in insects. This chain is Envelopment polyprotein (GP), found in Rift valley fever virus (strain ZH-548 M12) (RVFV).